Reading from the N-terminus, the 1030-residue chain is Arrestin domain-containing protein F (1030 aa).

Disordered stretches follow at residues 1–27 (MEIIKENNENDGENINNIPKKKSGSKR) and 119–154 (ENKNISDNSNFDDGEEDDTDNKKNINNKNNNNNNPL). Over residues 128–137 (NFDDGEEDDT) the composition is skewed to acidic residues. The segment covering 142–152 (NINNKNNNNNN) has biased composition (low complexity). Coiled coils occupy residues 320-374 (HQLE…HNNN) and 544-577 (QKLNKKDKEKEKEKEKENDNDNENNNSESLIRDQ). 2 disordered regions span residues 539-572 (SPQSPQKLNKKDKEKEKEKEKENDNDNENNNSES) and 885-931 (NNEK…NNNN). The segment covering 547-562 (NKKDKEKEKEKEKEND) has biased composition (basic and acidic residues). Residues 910-931 (SPSSSSFLSNSSNTSSSKNNNN) are compositionally biased toward low complexity.

The protein belongs to the arrestin family.

The protein is Arrestin domain-containing protein F (adcF) of Dictyostelium discoideum (Social amoeba).